A 196-amino-acid chain; its full sequence is Pentatricopeptide repeat-containing protein At1g62350 (196 aa).

2 PPR repeats span residues Asp-70–Phe-104 and Asp-105–Pro-139.

The protein belongs to the PPR family. P subfamily.

This Arabidopsis thaliana (Mouse-ear cress) protein is Pentatricopeptide repeat-containing protein At1g62350.